Consider the following 351-residue polypeptide: AA9 family lytic polysaccharide monooxygenase A (351 aa).

His-1 contacts Cu(2+). Cys-52 and Cys-178 form a disulfide bridge. N-linked (GlcNAc...) asparagine glycosylation is present at Asn-53. His-86 contributes to the Cu(2+) binding site. An N-linked (GlcNAc...) asparagine glycan is attached at Asn-138. O2 is bound by residues His-164 and Gln-173. Position 175 (Tyr-175) interacts with Cu(2+). Residue Ser-280 is the site of GPI-anchor amidated serine attachment. The propeptide at 281–351 is removed in mature form; it reads SAIGTSTASS…RSGTLGRLSF (71 aa).

The protein belongs to the polysaccharide monooxygenase AA9 family. Requires Cu(2+) as cofactor.

Its subcellular location is the cell membrane. It catalyses the reaction [(1-&gt;4)-beta-D-glucosyl]n+m + reduced acceptor + O2 = 4-dehydro-beta-D-glucosyl-[(1-&gt;4)-beta-D-glucosyl]n-1 + [(1-&gt;4)-beta-D-glucosyl]m + acceptor + H2O.. Lytic polysaccharide monooxygenase (LPMO) that depolymerizes crystalline and amorphous polysaccharides via the oxidation of scissile alpha- or beta-(1-4)-glycosidic bonds, yielding C1 or C4 oxidation products. Catalysis by LPMOs requires the reduction of the active-site copper from Cu(II) to Cu(I) by a reducing agent and H(2)O(2) or O(2) as a cosubstrate. In terms of biological role, has broad specificity, cleaving at any position along the beta-glucan backbone of xyloglucan, regardless of substitutions. Shows minor activity on glucomannan. The polypeptide is AA9 family lytic polysaccharide monooxygenase A (Gloeophyllum trabeum (Brown rot fungus)).